The following is a 198-amino-acid chain: ATP-dependent Clp protease proteolytic subunit (198 aa).

Residue serine 98 is the Nucleophile of the active site. Residue histidine 123 is part of the active site.

The protein belongs to the peptidase S14 family. Fourteen ClpP subunits assemble into 2 heptameric rings which stack back to back to give a disk-like structure with a central cavity, resembling the structure of eukaryotic proteasomes.

Its subcellular location is the cytoplasm. It catalyses the reaction Hydrolysis of proteins to small peptides in the presence of ATP and magnesium. alpha-casein is the usual test substrate. In the absence of ATP, only oligopeptides shorter than five residues are hydrolyzed (such as succinyl-Leu-Tyr-|-NHMec, and Leu-Tyr-Leu-|-Tyr-Trp, in which cleavage of the -Tyr-|-Leu- and -Tyr-|-Trp bonds also occurs).. Cleaves peptides in various proteins in a process that requires ATP hydrolysis. Has a chymotrypsin-like activity. Plays a major role in the degradation of misfolded proteins. This Listeria innocua serovar 6a (strain ATCC BAA-680 / CLIP 11262) protein is ATP-dependent Clp protease proteolytic subunit.